Here is a 202-residue protein sequence, read N- to C-terminus: Recoverin (202 aa).

Glycine 2 is lipidated: N-myristoyl glycine. EF-hand domains follow at residues threonine 24 to glutamate 59, aspartate 61 to glycine 96, lysine 97 to methionine 132, and threonine 147 to isoleucine 182. A Cysteine sulfenic acid (-SOH) modification is found at cysteine 39. Positions 74, 76, 78, 80, 85, 110, 112, 114, 116, and 121 each coordinate Ca(2+). Residues glutamate 189 to lysine 192 are interaction with GRK1. Residues glutamine 191 to leucine 202 are modulates EF-hand 3 domain calcium binding affinity.

Belongs to the recoverin family. Homodimer; disulfide-linked. Homodimerization is caused by prolonged intense illumination. May form a complex composed of RHO, GRK1 and RCVRN in a Ca(2+)-dependent manner; RCVRN prevents the interaction between GRK1 and RHO. Interacts (via C-terminus) with GRK1 (via N-terminus); the interaction is Ca(2+)-dependent. The N-terminal glycine is linked to one of four different types of acyl groups. The most abundant is myristoleate (14:1), but 14:0, 14:2, and 12:0 acyl residues are also present. The Ca(2+) induced exposure of the myristoyl group, known as the calcium-myristoyl switch, promotes RCVRN binding to the photoreceptor cell membranes only when intracellular Ca(2+) concentration is high. In terms of processing, oxidation on Cys-39 occurs in response to prolonged intense illumination and results in the formation of disulfide homodimers, and to a lesser extent disulfide-linked heterodimers. In terms of tissue distribution, expressed in the retina (at protein level). Expressed in the pineal gland (at protein level).

Its subcellular location is the photoreceptor inner segment. It is found in the cell projection. It localises to the cilium. The protein resides in the photoreceptor outer segment. The protein localises to the photoreceptor outer segment membrane. Its subcellular location is the perikaryon. Its function is as follows. Acts as a calcium sensor and regulates phototransduction of cone and rod photoreceptor cells. Modulates light sensitivity of cone photoreceptor in dark and dim conditions. In response to high Ca(2+) levels induced by low light levels, prolongs RHO/rhodopsin activation in rod photoreceptor cells by binding to and inhibiting GRK1-mediated phosphorylation of RHO/rhodopsin. Plays a role in scotopic vision/enhances vision in dim light by enhancing signal transfer between rod photoreceptors and rod bipolar cells. Improves rod photoreceptor sensitivity in dim light and mediates response of rod photoreceptors to facilitate detection of change and motion in bright light. The sequence is that of Recoverin (RCVRN) from Bos taurus (Bovine).